Reading from the N-terminus, the 616-residue chain is MGKIIGIDLGTTNSCVAVLEGGESVVIPNKEGARTTPSVVGFSKTGERLVGQVAKRQAITNPDRTVISIKRHMGTDYKVKIDDKNYTPQEISAMILQKLKADAEAYLGEPVTQAVITVPAYFTDSQRQATKDAGAIAGLEVMRIINEPTAAALAYGIDKGEDQTILVYDLGGGTFDVSILELGDGLFEVKATSGNNRLGGDDFDEKIINWMIAEFKKETGVDLRGDKMAMQRLKEAAEKAKIELSGVMSTNINLPFITATADGPQHLDMTLTRAKFDELTADLVEMTMGPTRQALQDAKLEPKDIDKVILVGGSSRIPAVQEAIRKYLGKEPFKGINPDEVVAMGAAIQAGVLGGEVKGIVLADVTPLSLGIETLGGICTVLIPRNTTIPTSKSETFTTAADNQTSVEVHVLQGERKLASQNKTLGRFHLSGIAPAPRGIPQIEVKFDIDANGIVHVSAKDKATGNEQKITITASTGLSKEEIERMIKDAELHAEEDRKRQEEVEIRNQADSMVYQAEKTLKDLGDKAEAADKAKIESAKEELKKALEGTDMEEIKKKTEALTTVVYELSTKLYQQASAPGAGPEGASGGFGGENKKDDNVVDADYTVIDDDKKKT.

A Phosphothreonine; by autocatalysis modification is found at Thr-174. The tract at residues 576 to 616 is disordered; that stretch reads QASAPGAGPEGASGGFGGENKKDDNVVDADYTVIDDDKKKT. Positions 583 to 593 are enriched in gly residues; that stretch reads GPEGASGGFGG.

This sequence belongs to the heat shock protein 70 family.

In terms of biological role, acts as a chaperone. The chain is Chaperone protein DnaK from Heliobacterium modesticaldum (strain ATCC 51547 / Ice1).